The chain runs to 269 residues: 5'-nucleotidase SurE (269 aa).

Positions 8, 9, 40, and 93 each coordinate a divalent metal cation.

It belongs to the SurE nucleotidase family. A divalent metal cation serves as cofactor.

It is found in the cytoplasm. The catalysed reaction is a ribonucleoside 5'-phosphate + H2O = a ribonucleoside + phosphate. Its function is as follows. Nucleotidase that shows phosphatase activity on nucleoside 5'-monophosphates. The sequence is that of 5'-nucleotidase SurE from Caulobacter sp. (strain K31).